Here is a 45-residue protein sequence, read N- to C-terminus: Endo-1,4-beta-xylanase Xyn10A (45 aa).

The protein belongs to the glycosyl hydrolase 10 (cellulase F) family.

The protein localises to the secreted. Its subcellular location is the extracellular space. The enzyme catalyses Endohydrolysis of (1-&gt;4)-beta-D-xylosidic linkages in xylans.. The catalysed reaction is Endohydrolysis of (1-&gt;4)-beta-D-glucosidic linkages in cellulose, lichenin and cereal beta-D-glucans.. Its pathway is glycan degradation; xylan degradation. Has xylanase, avicelase and cellobiohydrolase activity. In Gloeophyllum trabeum (Brown rot fungus), this protein is Endo-1,4-beta-xylanase Xyn10A.